The sequence spans 151 residues: Large ribosomal subunit protein bL9 (151 aa).

The protein belongs to the bacterial ribosomal protein bL9 family.

In terms of biological role, binds to the 23S rRNA. The protein is Large ribosomal subunit protein bL9 of Desulforapulum autotrophicum (strain ATCC 43914 / DSM 3382 / VKM B-1955 / HRM2) (Desulfobacterium autotrophicum).